Reading from the N-terminus, the 712-residue chain is Elongation factor G (712 aa).

The 283-residue stretch at 8 to 290 (TRYRNIGISA…AVIEFLPSPT (283 aa)) folds into the tr-type G domain. GTP-binding positions include 17 to 24 (AHIDAGKT), 88 to 92 (DTPGH), and 142 to 145 (NKMD).

Belongs to the TRAFAC class translation factor GTPase superfamily. Classic translation factor GTPase family. EF-G/EF-2 subfamily.

It is found in the cytoplasm. Functionally, catalyzes the GTP-dependent ribosomal translocation step during translation elongation. During this step, the ribosome changes from the pre-translocational (PRE) to the post-translocational (POST) state as the newly formed A-site-bound peptidyl-tRNA and P-site-bound deacylated tRNA move to the P and E sites, respectively. Catalyzes the coordinated movement of the two tRNA molecules, the mRNA and conformational changes in the ribosome. This is Elongation factor G from Acinetobacter baumannii (strain AB0057).